The following is a 482-amino-acid chain: MKFIIKLFPEITIKSQSVRLRFIKILTGNIRNVLKHYDETLAVVRHWDNIEVRAKDENQRLTIRDALTRIPGIHHILEVEDVPFTDMHDIFEKALVQYRDQLDGKTFCVRVKRRGKHDFSSIDVERYVGGGLNQHIESARVKLTNPDVTVHLEVEDDRLLLIKGRYEGIGGFPIGTQEDVLSLISGGFDSGVSSYMLMRRGCRVHYCFFNLGGAAHEIGVRQVAHYLWNRFGSSHRVRFVAINFEPVVGEILEKIDDGQMGVILKRMMVRAASKVAERYGVQALVTGEALGQVSSQTLTNLRLIDNVSDTLILRPLISYDKEHIINLARQIGTEDFARTMPEYCGVISKSPTVKAVKSKIEAEEEKFDFSILDKVVEEANNVDIREIAQQTGQEVVEVETVNDFGPNDVILDIRSVDEQEDKPLKVEGIDVVSLPFYKLSTKFGDLDQNRTWLLWCERGVMSRLQALYLREQGFKNVKVYRP.

The region spanning 61 to 165 is the THUMP domain; the sequence is LTIRDALTRI…DDRLLLIKGR (105 aa). ATP contacts are provided by residues 183-184, Lys-265, Gly-287, and Gln-296; that span reads LI. The cysteines at positions 344 and 456 are disulfide-linked. The 79-residue stretch at 404–482 folds into the Rhodanese domain; it reads FGPNDVILDI…GFKNVKVYRP (79 aa). The active-site Cysteine persulfide intermediate is Cys-456.

Belongs to the ThiI family. In terms of assembly, interacts with IscS.

Its subcellular location is the cytoplasm. The catalysed reaction is [ThiI sulfur-carrier protein]-S-sulfanyl-L-cysteine + a uridine in tRNA + 2 reduced [2Fe-2S]-[ferredoxin] + ATP + H(+) = [ThiI sulfur-carrier protein]-L-cysteine + a 4-thiouridine in tRNA + 2 oxidized [2Fe-2S]-[ferredoxin] + AMP + diphosphate. The enzyme catalyses [ThiS sulfur-carrier protein]-C-terminal Gly-Gly-AMP + S-sulfanyl-L-cysteinyl-[cysteine desulfurase] + AH2 = [ThiS sulfur-carrier protein]-C-terminal-Gly-aminoethanethioate + L-cysteinyl-[cysteine desulfurase] + A + AMP + 2 H(+). Its pathway is cofactor biosynthesis; thiamine diphosphate biosynthesis. Functionally, catalyzes the ATP-dependent transfer of a sulfur to tRNA to produce 4-thiouridine in position 8 of tRNAs, which functions as a near-UV photosensor. Also catalyzes the transfer of sulfur to the sulfur carrier protein ThiS, forming ThiS-thiocarboxylate. This is a step in the synthesis of thiazole, in the thiamine biosynthesis pathway. The sulfur is donated as persulfide by IscS. This Escherichia coli O157:H7 protein is tRNA sulfurtransferase.